The sequence spans 272 residues: 3-methyl-2-oxobutanoate hydroxymethyltransferase (272 aa).

Mg(2+)-binding residues include Asp-53 and Asp-92. 3-methyl-2-oxobutanoate is bound by residues 53–54 (DS), Asp-92, and Lys-120. A Mg(2+)-binding site is contributed by Glu-122. The active-site Proton acceptor is the Glu-189.

It belongs to the PanB family. Homodecamer; pentamer of dimers. Requires Mg(2+) as cofactor.

The protein resides in the cytoplasm. It catalyses the reaction 3-methyl-2-oxobutanoate + (6R)-5,10-methylene-5,6,7,8-tetrahydrofolate + H2O = 2-dehydropantoate + (6S)-5,6,7,8-tetrahydrofolate. It functions in the pathway cofactor biosynthesis; (R)-pantothenate biosynthesis; (R)-pantoate from 3-methyl-2-oxobutanoate: step 1/2. Its function is as follows. Catalyzes the reversible reaction in which hydroxymethyl group from 5,10-methylenetetrahydrofolate is transferred onto alpha-ketoisovalerate to form ketopantoate. This chain is 3-methyl-2-oxobutanoate hydroxymethyltransferase, found in Ralstonia pickettii (strain 12J).